The primary structure comprises 133 residues: Small ribosomal subunit protein uS8 (133 aa).

The protein belongs to the universal ribosomal protein uS8 family. In terms of assembly, part of the 30S ribosomal subunit.

Functionally, one of the primary rRNA binding proteins, it binds directly to 16S rRNA central domain where it helps coordinate assembly of the platform of the 30S subunit. This chain is Small ribosomal subunit protein uS8, found in Sulfolobus acidocaldarius (strain ATCC 33909 / DSM 639 / JCM 8929 / NBRC 15157 / NCIMB 11770).